Here is a 95-residue protein sequence, read N- to C-terminus: Protein TusB (95 aa).

It belongs to the DsrH/TusB family. As to quaternary structure, heterohexamer, formed by a dimer of trimers. The hexameric TusBCD complex contains 2 copies each of TusB, TusC and TusD. The TusBCD complex interacts with TusE.

The protein localises to the cytoplasm. Part of a sulfur-relay system required for 2-thiolation of 5-methylaminomethyl-2-thiouridine (mnm(5)s(2)U) at tRNA wobble positions. The chain is Protein TusB from Sodalis glossinidius (strain morsitans).